Here is a 152-residue protein sequence, read N- to C-terminus: NADH-ubiquinone oxidoreductase chain 4 (152 aa).

4 helical membrane passes run 2-22 (FSGA…YFCL), 43-63 (ILLP…LALP), 84-104 (ITIV…LHMF), and 128-148 (MLMF…NIIL).

The protein belongs to the complex I subunit 4 family.

Its subcellular location is the mitochondrion membrane. The catalysed reaction is a ubiquinone + NADH + 5 H(+)(in) = a ubiquinol + NAD(+) + 4 H(+)(out). Its function is as follows. Core subunit of the mitochondrial membrane respiratory chain NADH dehydrogenase (Complex I) that is believed to belong to the minimal assembly required for catalysis. Complex I functions in the transfer of electrons from NADH to the respiratory chain. The immediate electron acceptor for the enzyme is believed to be ubiquinone. This is NADH-ubiquinone oxidoreductase chain 4 (MT-ND4) from Macaca fascicularis (Crab-eating macaque).